Here is a 424-residue protein sequence, read N- to C-terminus: Endoglucanase 1 (424 aa).

The N-terminal stretch at 1–18 (MAKFSALCSLALLGLATA) is a signal peptide. 9 disulfides stabilise this stretch: C35/C41, C68/C90, C80/C86, C156/C384, C188/C211, C192/C210, C231/C250, C239/C244, and C255/C331. A glycan (N-linked (GlcNAc...) asparagine) is linked at N76. E213 (nucleophile) is an active-site residue. E218 functions as the Proton donor in the catalytic mechanism. N-linked (GlcNAc...) asparagine glycans are attached at residues N271 and N385.

Belongs to the glycosyl hydrolase 7 (cellulase C) family. Monomer.

It localises to the secreted. It carries out the reaction Endohydrolysis of (1-&gt;4)-beta-D-glucosidic linkages in cellulose, lichenin and cereal beta-D-glucans.. In terms of biological role, endoglucanase that is involved in the biological conversion of cellulose to glucose. Hydrolyzes internal beta-1,4-glucosidic bonds. The polypeptide is Endoglucanase 1 (Pyricularia oryzae (strain 70-15 / ATCC MYA-4617 / FGSC 8958) (Rice blast fungus)).